The sequence spans 410 residues: F-box protein At3g19890 (410 aa).

The F-box domain occupies 2-49; it reads TMISDLSKDLVEEILSKAPITSLGAVRSTHKQWNALSKGRLLYKAEAK. A disordered region spans residues 386-410; it reads EDKCKSIKMVDTKRQRKKRKRKSKR. The span at 387–398 shows a compositional bias: basic and acidic residues; that stretch reads DKCKSIKMVDTK. The segment covering 399-410 has biased composition (basic residues); that stretch reads RQRKKRKRKSKR.

The polypeptide is F-box protein At3g19890 (Arabidopsis thaliana (Mouse-ear cress)).